Here is a 192-residue protein sequence, read N- to C-terminus: Protein FAM169BP (192 aa).

A disordered region spans residues 121–192; that stretch reads YQAHPGNSED…PPGKLTRSSP (72 aa). Residues 159–177 are compositionally biased toward acidic residues; it reads EELEDTKDDPECGVEEEDA.

This sequence belongs to the FAM169 family.

The chain is Protein FAM169BP from Homo sapiens (Human).